We begin with the raw amino-acid sequence, 458 residues long: MGGPGPRRAGTSRERLVVTGRAGWMGMGRGAGRSALGFWPTLAFLLCSFPAATSPCKILKCNSEFWSATSGSHAPASDDTPEFCAALRSYALCTRRTARTCRGDLAYHSAVHGIEDLMSQHNCSKDGPTSQPRLHTLPPAGDSQERSDSPEICHCEKSFHKHSATPNYTHCGLFGDPHLRTFTDRFQTCKVQGAWPLIDNNYLNVQVTNTPVLPGSAATATSKLTIIFKNFQECVDQKVYQAEMDELPAAFVDGSKNGGDKHGANSLKITEKVSGQHVEIRAKYIGTTIVVRQVGRYLTFAVRVPEEVVNAVEDWDSQGLYLCLRGCPLNQQIDFQAFHTNTEGTGARRLAAASPAPTAPETFPYETAVAKCKEKLPVEDLYYQACVFDLLTTGDVNFTLAAYYALEDVKMLHSNKDKLHLYERTRDLPGRAAAGLPLAPQPLLGALILLLALFPVFC.

The N-terminal stretch at M1–T53 is a signal peptide. Residues S54–D176 constitute a propeptide, removed in mature form. Over residues H121–R133 the composition is skewed to polar residues. The segment at H121–S149 is disordered. 2 N-linked (GlcNAc...) asparagine glycosylation sites follow: N122 and N167. 2 disulfides stabilise this stretch: C153/C234 and C171/C323. N397 carries an N-linked (GlcNAc...) asparagine glycan. A lipid anchor (GPI-anchor amidated alanine) is attached at A433. A propeptide spans A434 to C458 (removed in mature form).

It belongs to the repulsive guidance molecule (RGM) family. In terms of assembly, interacts with NEO1, BMP2 and BMP4. In terms of processing, autocatalytically cleaved at low pH; the two chains remain linked via two disulfide bonds.

It localises to the cell membrane. Its function is as follows. Member of the repulsive guidance molecule (RGM) family that performs several functions in the developing and adult nervous system. Regulates cephalic neural tube closure, inhibits neurite outgrowth and cortical neuron branching, and the formation of mature synapses. Binding to its receptor NEO1/neogenin induces activation of RHOA-ROCK1/Rho-kinase signaling pathway through UNC5B-ARHGEF12/LARG-PTK2/FAK1 cascade, leading to collapse of the neuronal growth cone and neurite outgrowth inhibition. Furthermore, RGMA binding to NEO1/neogenin leads to HRAS inactivation by influencing HRAS-PTK2/FAK1-AKT1 pathway. It also functions as a bone morphogenetic protein (BMP) coreceptor that may signal through SMAD1, SMAD5, and SMAD8. The protein is Repulsive guidance molecule A (RGMA) of Macaca fascicularis (Crab-eating macaque).